We begin with the raw amino-acid sequence, 269 residues long: Phosphate import ATP-binding protein PstB (269 aa).

Residues 21-264 (IEIKDFNFFY…PKDRRTENYI (244 aa)) form the ABC transporter domain. 55–62 (GPSGCGKT) is a binding site for ATP.

It belongs to the ABC transporter superfamily. Phosphate importer (TC 3.A.1.7) family. In terms of assembly, the complex is composed of two ATP-binding proteins (PstB), two transmembrane proteins (PstC and PstA) and a solute-binding protein (PstS).

The protein localises to the cell membrane. It catalyses the reaction phosphate(out) + ATP + H2O = ADP + 2 phosphate(in) + H(+). Part of the ABC transporter complex PstSACB involved in phosphate import. Responsible for energy coupling to the transport system. The chain is Phosphate import ATP-binding protein PstB from Mycoplasma capricolum subsp. capricolum (strain California kid / ATCC 27343 / NCTC 10154).